The following is a 1332-amino-acid chain: Abscisic-aldehyde oxidase (1332 aa).

One can recognise a 2Fe-2S ferredoxin-type domain in the interval 1-88 (MDLEFAVNGE…GCSITTSEGL (88 aa)). [2Fe-2S] cluster contacts are provided by cysteine 40, cysteine 45, and cysteine 48. Residues 219–400 (SDHLKYRWTT…LKVEIPSWTA (182 aa)) form the FAD-binding PCMH-type domain.

This sequence belongs to the xanthine dehydrogenase family. In terms of assembly, aldehyde oxidases (AO) are homodimers and heterodimers of AO subunits. AO-delta is a AAO3 homodimer. AAO3 also forms a dimer with AAO2. Interacts with PUB44, and this interaction probably results in targeting of this protein to the proteasome. [2Fe-2S] cluster serves as cofactor. Requires FAD as cofactor. The cofactor is Mo-molybdopterin. Expressed in vascular tissues of all organs, particularly in phloem companion cells and xylem parenchymatic cells. Highly expressed in roots and rosettes, and to lower extent in seedlings, stems and flowers. Expressed at very low levels in siliques and dry seeds. Also detected in root dividing cells (tips and primordia), in mesophyll cells and inside the guard cells.

The protein localises to the cytoplasm. The enzyme catalyses 2-cis-(+)-abscisic aldehyde + O2 + H2O = 2-cis-(+)-abscisate + H2O2 + H(+). The catalysed reaction is 1-naphthaldehyde + O2 + H2O = 1-naphthoate + H2O2 + H(+). It carries out the reaction indole-3-acetaldehyde + O2 + H2O = (indol-3-yl)acetate + H2O2 + H(+). Functionally, in higher plants aldehyde oxidases (AO) appear to be homo- and heterodimeric assemblies of AO subunits with probably different physiological functions. AO-delta may be involved in the last step of abscisic acid biosynthesis, at least in leaves and seeds. In vitro, AO-delta oxidizes abscisic aldehyde to abscisic acid (ABA). In vitro, AO-delta also uses 1-naphthaldehyde, indole-3-aldehyde (IAld), benzaldehyde and cinnamaldehyde as substrate; the AAO2-AAO3 dimer also uses abscisic aldehyde as substrate. The protein is Abscisic-aldehyde oxidase (AAO3) of Arabidopsis thaliana (Mouse-ear cress).